Consider the following 172-residue polypeptide: dCTP pyrophosphatase (172 aa).

The catalysed reaction is dCTP + H2O = dCMP + diphosphate + H(+). The polypeptide is dCTP pyrophosphatase (56) (Enterobacteria phage LZ5 (Bacteriophage LZ5)).